Reading from the N-terminus, the 158-residue chain is HVA22-like protein f (158 aa).

3 helical membrane-spanning segments follow: residues 2–22 (GFII…VMLL), 41–61 (QQWL…LSVW), and 63–83 (VLAW…WLVL).

It belongs to the DP1 family.

The protein localises to the membrane. In Arabidopsis thaliana (Mouse-ear cress), this protein is HVA22-like protein f (HVA22F).